A 380-amino-acid chain; its full sequence is MEEVKKRDCMEKARPFISMVVLQVGLAGMDILSKAVLNKGMSNYVLVVYRHAVATIVMAPFAFYFDKKVRPKMTLMIFFKISLLGLLEPVIDQNLYYLGMKYTTATFATAMYNVLPAITFVLAYIFGLERVKLRCIRSTGKVVGTLATVGGAMIMTLVKGPVLDLFWTKGVSAHNTAGTDIHSAIKGAVLVTIGCFSYACFMILQAITLRTYPAELSLTAWICLMGTIEGTAVALVMEKGNPSAWAIGWDTKLLTATYSGIVCSALAYYVGGVVMKTRGPVFVTAFSPLCMIIVAIMSTIIFAEQMYLGRVLGAVVICAGLYLVIWGKGKDYKYNSTLQLDDESAQPKLELSGNGKDNVDHEVITISKQGEQRRTAVETV.

10 helical membrane-spanning segments follow: residues F16 to V36, V45 to F65, P71 to I91, F107 to G127, V142 to V162, G187 to I207, L216 to V236, L254 to V274, F282 to F302, and M306 to W326. In terms of domain architecture, EamA 1 spans A27 to R134. The EamA 2 domain maps to F196 to I325.

The protein belongs to the drug/metabolite transporter (DMT) superfamily. Plant drug/metabolite exporter (P-DME) (TC 2.A.7.4) family.

It is found in the membrane. This is WAT1-related protein At2g37460 from Arabidopsis thaliana (Mouse-ear cress).